We begin with the raw amino-acid sequence, 276 residues long: Large ribosomal subunit protein uL2 (276 aa).

Disordered regions lie at residues 14–58 (RNAS…GGGH) and 221–276 (TRGE…KNRK). The segment covering 16 to 27 (ASVSDFSELTRS) has biased composition (polar residues). Positions 255–276 (RRPKKASNKMIVRRRPSGKNRK) are enriched in basic residues.

It belongs to the universal ribosomal protein uL2 family. In terms of assembly, part of the 50S ribosomal subunit. Forms a bridge to the 30S subunit in the 70S ribosome.

In terms of biological role, one of the primary rRNA binding proteins. Required for association of the 30S and 50S subunits to form the 70S ribosome, for tRNA binding and peptide bond formation. It has been suggested to have peptidyltransferase activity; this is somewhat controversial. Makes several contacts with the 16S rRNA in the 70S ribosome. The protein is Large ribosomal subunit protein uL2 of Bifidobacterium longum subsp. infantis (strain ATCC 15697 / DSM 20088 / JCM 1222 / NCTC 11817 / S12).